Reading from the N-terminus, the 305-residue chain is Ornithine carbamoyltransferase (305 aa).

Residues 54–57 (STRT), Gln81, Arg105, and 132–135 (HPCQ) contribute to the carbamoyl phosphate site. Residues Asn163, Asp223, and 227–228 (SM) contribute to the L-ornithine site. Residues 262–263 (CL) and Arg290 contribute to the carbamoyl phosphate site.

The protein belongs to the aspartate/ornithine carbamoyltransferase superfamily. OTCase family.

The protein resides in the cytoplasm. It carries out the reaction carbamoyl phosphate + L-ornithine = L-citrulline + phosphate + H(+). Its pathway is amino-acid biosynthesis; L-arginine biosynthesis; L-arginine from L-ornithine and carbamoyl phosphate: step 1/3. Reversibly catalyzes the transfer of the carbamoyl group from carbamoyl phosphate (CP) to the N(epsilon) atom of ornithine (ORN) to produce L-citrulline. The chain is Ornithine carbamoyltransferase from Agrobacterium fabrum (strain C58 / ATCC 33970) (Agrobacterium tumefaciens (strain C58)).